The chain runs to 1015 residues: Fibronectin-binding protein A (1015 aa).

Positions 1 to 36 are cleaved as a signal peptide; sequence MKNNLRYGIRKHKLGAASVFLGTMIVVGMGQDKEAA. Positions 7 to 18 match the YSIRK-G/S signaling motif motif; that stretch reads YGIRKHKLGAAS. Residues 37 to 512 form a ligand-binding A region region; it reads ASEQKTTTVE…SNKADGNGKN (476 aa). Over residues 75-92 the composition is skewed to polar residues; that stretch reads SYSATATEQPSNATQVTT. The tract at residues 75-199 is disordered; it reads SYSATATEQP…KVETGTDVTS (125 aa). The span at 112-126 shows a compositional bias: basic and acidic residues; the sequence is TVKEEVVKEEAKPQV. Polar residues predominate over residues 129-139; it reads TTQSQDNSGDQ. The segment covering 179 to 193 has biased composition (basic and acidic residues); the sequence is DVVEAKEASDEKVET. The interval 194–512 is fibrinogen/elastin/tropoelastin-binding; that stretch reads GTDVTSKVTV…SNKADGNGKN (319 aa). The segment at 513–873 is fibronectin-binding; sequence GQIIQNNDFE…EGQQTIEEDT (361 aa). Residues 546 to 575 form a B-1 repeat; it reads ENQDNTPLDIDYHTAIDGEGGYVDGYIETI. The tract at residues 546 to 605 is 2 X approximate tandem repeats; the sequence is ENQDNTPLDIDYHTAIDGEGGYVDGYIETIEETDSSAIDIDYHTAVDSEAGHVGGYTESS. Residues 576 to 605 form a B-2 repeat; the sequence is EETDSSAIDIDYHTAVDSEAGHVGGYTESS. Disordered stretches follow at residues 596-623, 741-815, 828-953, and 966-992; these read GHVG…NSKH, LGYE…IDFD, EIIE…GKVV, and VAPT…NKGM. One copy of the D-1 repeat lies at 746–783; the sequence is GQNSGNQSFEEDTEEDKPKYEQGGNIVDIDFDSVPQIQ. The tract at residues 746–875 is 4 X approximate tandem repeats; sequence GQNSGNQSFE…QQTIEEDTTP (130 aa). Polar residues predominate over residues 780–791; the sequence is PQIQGQNNGNQS. A D-2 repeat occupies 784–821; it reads GQNNGNQSFEEDTEKDKPKYEQGGNIIDIDFDSVPQIH. Residues 822–860 form a D-3 repeat; it reads GFNKHTEIIEEDTNKDKPNYQFGGHNSVDFEEDTLPKVS. Positions 828-839 are enriched in basic and acidic residues; sequence EIIEEDTNKDKP. The D-4; truncated repeat unit spans residues 861–875; it reads GQNEGQQTIEEDTTP. A compositionally biased stretch (pro residues) spans 875 to 935; that stretch reads PPTPPTPEVP…PAEPGKPVPP (61 aa). WR repeat units lie at residues 876 to 889, 890 to 903, 904 to 917, 918 to 931, and 932 to 945; these read PTPP…EPET, PTPP…EPGK, and PVPP…KPSK. A 5 X tandem repeats, Pro-rich (WR) region spans residues 876-945; that stretch reads PTPPTPEVPS…AKEEPKKPSK (70 aa). The LPXTG sorting signal motif lies at 979–983; the sequence is LPETG. T982 is modified (pentaglycyl murein peptidoglycan amidated threonine). Residues 983–1015 constitute a propeptide, removed by sortase; sequence GGEESTNKGMLFGGLFSILGLALLRRNKKNNKA.

It is found in the secreted. Its subcellular location is the cell wall. In terms of biological role, promotes bacterial attachment to multiple substrates, such as fibronectin (Fn), fibrinogen (Fg), elastin peptides and tropoelastin. This confers to S.aureus the ability to invade endothelial cells. Promotes adherence to and aggregation of activated platelets. The polypeptide is Fibronectin-binding protein A (fnbA) (Staphylococcus aureus (strain MSSA476)).